The following is a 302-amino-acid chain: NAD kinase 2 (302 aa).

The active-site Proton acceptor is the Asp78. NAD(+) contacts are provided by residues 78–79 (DG), 152–153 (NE), Asp182, 193–198 (TAYALS), and Ala217.

This sequence belongs to the NAD kinase family. A divalent metal cation serves as cofactor.

Its subcellular location is the cytoplasm. It catalyses the reaction NAD(+) + ATP = ADP + NADP(+) + H(+). Functionally, involved in the regulation of the intracellular balance of NAD and NADP, and is a key enzyme in the biosynthesis of NADP. Catalyzes specifically the phosphorylation on 2'-hydroxyl of the adenosine moiety of NAD to yield NADP. The protein is NAD kinase 2 of Prochlorococcus marinus (strain MIT 9313).